We begin with the raw amino-acid sequence, 515 residues long: Putative cytochrome P450 CYP13A2 (515 aa).

Position 460 (cysteine 460) interacts with heme.

Belongs to the cytochrome P450 family. Heme is required as a cofactor.

Its function is as follows. Cytochromes P450 are a group of heme-thiolate monooxygenases. They oxidize a variety of structurally unrelated compounds, including steroids, fatty acids, and xenobiotics. This chain is Putative cytochrome P450 CYP13A2 (cyp-13A2), found in Caenorhabditis elegans.